We begin with the raw amino-acid sequence, 261 residues long: UPF0246 protein AZOSEA34360 (261 aa).

The protein belongs to the UPF0246 family.

This chain is UPF0246 protein AZOSEA34360, found in Aromatoleum aromaticum (strain DSM 19018 / LMG 30748 / EbN1) (Azoarcus sp. (strain EbN1)).